The following is a 699-amino-acid chain: SPS-sensor serine protease component SSY5 (699 aa).

2 disordered regions span residues 1–113 (MVRF…LQGF) and 129–158 (VKEE…GNAR). A propeptide spanning residues 1-381 (MVRFFGLNKE…YCVKDYIKKA (381 aa)) is cleaved from the precursor. Positions 8–18 (NKEKNEEKENT) are enriched in basic and acidic residues. A compositionally biased stretch (polar residues) spans 24 to 38 (NEQNAAETSSSNVSG). Positions 39-51 (NEERIDPNSRDTN) are enriched in basic and acidic residues. A compositionally biased stretch (low complexity) spans 61–78 (STTFGSSIQSSSIFSRGR). A compositionally biased stretch (polar residues) spans 83–93 (TGASSSMATSE). Residues 144–154 (SSSTSSTLATS) are compositionally biased toward low complexity. Positions 459 to 699 (FAITCAHVVL…QWDIDPQLDG (241 aa)) are serine protease. Residues histidine 465, aspartate 545, and serine 640 each act as charge relay system in the active site.

It belongs to the peptidase S64 family. As to quaternary structure, component of the plasma membrane SPS (SSY1-PTR3-SSY5) amino acid sensor complex. The propeptide is autoproteolytically cleaved from the catalytic domain but remains associated, forming an inactive protease complex. This processing occurs even in the absence of signaling.

Its subcellular location is the cell membrane. In terms of biological role, protease component of the SPS-sensor system, which regulates the expression of several amino acid-metabolizing enzymes and amino acid- and peptide-permeases in response to extracellular amino acid levels by controlling the activity of two transcription factors, STP1 and STP2. Catalyzes the activation of these transcription factors, which are synthesized as latent cytoplasmic precursors, by proteolytic removal of an N-terminal inhibitory domain containing cytoplasmic retention motifs. SSY5 binds as an inactive protease complex to STP1. In response to extracellular amino acids and dependent on the other SPS-sensor components, the inhibitory propeptide is induced to dissociate, and thereby enables the catalytic domain to process STP1. In Saccharomyces cerevisiae (strain AWRI1631) (Baker's yeast), this protein is SPS-sensor serine protease component SSY5 (SSY5).